The following is a 462-amino-acid chain: Alkaline phosphatase 3 (462 aa).

The signal sequence occupies residues 1–32 (MKKFPKKLLPIAVLSSIAFSSLASGSVPEASA). Asp-52 provides a ligand contact to Mg(2+). Residue Asp-52 coordinates Zn(2+). Ser-101 (phosphoserine intermediate) is an active-site residue. Mg(2+)-binding residues include Thr-154 and Glu-275. 5 residues coordinate Zn(2+): Asp-280, His-284, Asp-322, His-323, and His-419.

It belongs to the alkaline phosphatase family. As to quaternary structure, monomer. It depends on Mg(2+) as a cofactor. Zn(2+) is required as a cofactor.

It carries out the reaction a phosphate monoester + H2O = an alcohol + phosphate. The sequence is that of Alkaline phosphatase 3 (phoB) from Bacillus subtilis (strain 168).